A 522-amino-acid chain; its full sequence is Glycogen synthase (522 aa).

A disordered region spans residues 1–29 (MISAVLDTQGDHPQQQAGDRAAPSVPVPG). Lysine 58 is an ADP-alpha-D-glucose binding site.

The protein belongs to the glycosyltransferase 1 family. Bacterial/plant glycogen synthase subfamily.

The enzyme catalyses [(1-&gt;4)-alpha-D-glucosyl](n) + ADP-alpha-D-glucose = [(1-&gt;4)-alpha-D-glucosyl](n+1) + ADP + H(+). It functions in the pathway glycan biosynthesis; glycogen biosynthesis. Synthesizes alpha-1,4-glucan chains using ADP-glucose. The sequence is that of Glycogen synthase from Pseudomonas fluorescens (strain ATCC BAA-477 / NRRL B-23932 / Pf-5).